The chain runs to 290 residues: 4-hydroxy-tetrahydrodipicolinate synthase (290 aa).

Residue T48 participates in pyruvate binding. The active-site Proton donor/acceptor is Y137. K165 serves as the catalytic Schiff-base intermediate with substrate. A pyruvate-binding site is contributed by I206.

This sequence belongs to the DapA family. In terms of assembly, homotetramer; dimer of dimers.

Its subcellular location is the cytoplasm. The catalysed reaction is L-aspartate 4-semialdehyde + pyruvate = (2S,4S)-4-hydroxy-2,3,4,5-tetrahydrodipicolinate + H2O + H(+). The protein operates within amino-acid biosynthesis; L-lysine biosynthesis via DAP pathway; (S)-tetrahydrodipicolinate from L-aspartate: step 3/4. Functionally, catalyzes the condensation of (S)-aspartate-beta-semialdehyde [(S)-ASA] and pyruvate to 4-hydroxy-tetrahydrodipicolinate (HTPA). The protein is 4-hydroxy-tetrahydrodipicolinate synthase of Ligilactobacillus salivarius (strain UCC118) (Lactobacillus salivarius).